Reading from the N-terminus, the 1253-residue chain is Latent-transforming growth factor beta-binding protein 3 (1253 aa).

The first 38 residues, 1–38, serve as a signal peptide directing secretion; that stretch reads MPGPRGAAHGLAPAMRQAGALGLLALLLLALLGPGGGA. N-linked (GlcNAc...) asparagine glycosylation is present at Asn-86. Residues 106–138 form the EGF-like 1 domain; it reads RVVVCPLPCMNGGQCSSRNQCLCPPDFTGRFCQ. 3 cysteine pairs are disulfide-bonded: Cys-110-Cys-120, Cys-114-Cys-126, and Cys-128-Cys-137. The segment at 244–270 is disordered; sequence GPNAEGPASSQHLLPHPKPQHPRPPTQ. Positions 274–328 constitute a TB 1 domain; the sequence is GRCFQDTLPKQPCGSNPLPGLTKQEDCCGSIGTAWGQSKCHKCPQLQYTGVQKPG. Disulfide bonds link Cys-276/Cys-300, Cys-286/Cys-313, and Cys-301/Cys-316. Asn-346 is a glycosylation site (N-linked (GlcNAc...) asparagine). The EGF-like 2; calcium-binding domain occupies 352–392; it reads DINECAMPGMCRHGDCLNNPGSYRCVCPPGHSLGPSRTQCI. 7 cysteine pairs are disulfide-bonded: Cys-356-Cys-367, Cys-362-Cys-376, Cys-378-Cys-391, Cys-402-Cys-425, Cys-412-Cys-437, Cys-426-Cys-440, and Cys-427-Cys-452. The region spanning 400 to 452 is the TB 2 domain; the sequence is SLCFRLVSTEHQCQHPLTTRLTRQLCCCSVGKAWGARCQRCPADGTAAFKEIC. The interval 475–555 is disordered; the sequence is FSLFLHPDGP…PTFHRFLPDL (81 aa). An EGF-like 3 domain is found at 571–612; sequence ETDECRLNQNICGHGQCVPGPSDYSCHCNAGYRSHPQHRYCV. 32 disulfides stabilise this stretch: Cys-575–Cys-587, Cys-582–Cys-596, Cys-598–Cys-611, Cys-617–Cys-629, Cys-622–Cys-638, Cys-661–Cys-673, Cys-667–Cys-682, Cys-684–Cys-698, Cys-745–Cys-756, Cys-751–Cys-765, Cys-767–Cys-780, Cys-786–Cys-797, Cys-792–Cys-806, Cys-808–Cys-821, Cys-827–Cys-838, Cys-833–Cys-847, Cys-849–Cys-861, Cys-867–Cys-880, Cys-874–Cys-889, Cys-891–Cys-904, Cys-916–Cys-939, Cys-926–Cys-951, Cys-940–Cys-956, Cys-941–Cys-968, Cys-994–Cys-1007, Cys-1002–Cys-1016, Cys-1018–Cys-1031, Cys-1037–Cys-1048, Cys-1043–Cys-1057, Cys-1059–Cys-1072, Cys-1113–Cys-1127, and Cys-1114–Cys-1136. Residues 613–656 form the EGF-like 4; calcium-binding domain; that stretch reads DVNECEAEPCGPGKGICMNTGGSYNCHCNRGYRLHVGAGGRSCV. An EGF-like 5; calcium-binding domain is found at 657–699; sequence DLNECTKPHLCGDGGFCINFPGHYKCNCYPGYRLKASRPPICE. The 41-residue stretch at 741-781 folds into the EGF-like 6; calcium-binding domain; sequence DVNECSEGTPCSPGWCENLPGSYRCTCAQGYEPAQDGLSCI. One can recognise an EGF-like 7; calcium-binding domain in the interval 782–822; it reads DVDECEAGKVCQDGICTNTPGSFQCQCLSGYHLSRDRSRCE. An EGF-like 8; calcium-binding domain is found at 823 to 861; sequence DIDECDFPAACIGGDCINTNGSYRCLCPQGHRLVGGRKC. Residue Asn-842 is glycosylated (N-linked (GlcNAc...) asparagine). The EGF-like 9; calcium-binding domain occupies 863-905; that stretch reads DIDECSQDPGLCLPHGACENLQGSYVCVCDEGFTLTQDQHGCE. Residues 914 to 968 enclose the TB 3 domain; that stretch reads KECYLNFDDTVFCDSVLATNVTQQECCCSLGAGWGDHCEIYPCPVYSSAEFHSLC. Asn-933 carries N-linked (GlcNAc...) asparagine glycosylation. The 43-residue stretch at 990 to 1032 folds into the EGF-like 10; calcium-binding domain; it reads DIDECILFGAEICKEGKCVNTQPGYECYCKQGFYYDGNLLECV. The EGF-like 11; calcium-binding domain occupies 1033–1072; sequence DVDECLDESNCRNGVCENTRGGYRCACTPPAEYSPAQRQC. The TB 4 domain maps to 1086–1136; the sequence is EVCWGQRGEDGMCMGPLAGPALTFDDCCCRQGRGWGTQCRPCPPRGTGSQC. Over residues 1138–1148 the composition is skewed to polar residues; the sequence is TSQSESNSFWD. The tract at residues 1138–1169 is disordered; that stretch reads TSQSESNSFWDTSPLLLGKSPRDEDSSEEDSD. Positions 1204-1231 constitute an EGF-like 12; calcium-binding domain; it reads DIDECRELNQRGLLCKSERCVNTSGSFR. 2 disulfides stabilise this stretch: Cys-1208-Cys-1223 and Cys-1218-Cys-1232. The N-linked (GlcNAc...) asparagine glycan is linked to Asn-1225.

The protein belongs to the LTBP family. As to quaternary structure, forms part of the large latent transforming growth factor beta (TGFB1) precursor complex; removal is essential for activation of complex. Interacts with EFEMP2. Post-translationally, contains hydroxylated asparagine residues. In terms of processing, two intrachain disulfide bonds from the TB3 domain are rearranged upon TGFB1 binding, and form interchain bonds with TGFB1 propeptide, anchoring it to the extracellular matrix.

The protein localises to the secreted. It is found in the extracellular space. Its subcellular location is the extracellular matrix. Its function is as follows. Key regulator of transforming growth factor beta (TGFB1, TGFB2 and TGFB3) that controls TGF-beta activation by maintaining it in a latent state during storage in extracellular space. Associates specifically via disulfide bonds with the Latency-associated peptide (LAP), which is the regulatory chain of TGF-beta, and regulates integrin-dependent activation of TGF-beta. This is Latent-transforming growth factor beta-binding protein 3 (Ltbp3) from Mus musculus (Mouse).